Reading from the N-terminus, the 359-residue chain is Dual-specificity RNA methyltransferase RlmN 1 (359 aa).

Catalysis depends on Glu-96, which acts as the Proton acceptor. The Radical SAM core domain maps to 102–335 (FKGRATVCIS…STVRQRRGID (234 aa)). The cysteines at positions 109 and 340 are disulfide-linked. [4Fe-4S] cluster is bound by residues Cys-116, Cys-120, and Cys-123. S-adenosyl-L-methionine contacts are provided by residues 166-167 (GE), Ser-198, 221-223 (SLH), and Asn-297. Residue Cys-340 is the S-methylcysteine intermediate of the active site.

This sequence belongs to the radical SAM superfamily. RlmN family. [4Fe-4S] cluster serves as cofactor.

The protein resides in the cytoplasm. The catalysed reaction is adenosine(2503) in 23S rRNA + 2 reduced [2Fe-2S]-[ferredoxin] + 2 S-adenosyl-L-methionine = 2-methyladenosine(2503) in 23S rRNA + 5'-deoxyadenosine + L-methionine + 2 oxidized [2Fe-2S]-[ferredoxin] + S-adenosyl-L-homocysteine. It carries out the reaction adenosine(37) in tRNA + 2 reduced [2Fe-2S]-[ferredoxin] + 2 S-adenosyl-L-methionine = 2-methyladenosine(37) in tRNA + 5'-deoxyadenosine + L-methionine + 2 oxidized [2Fe-2S]-[ferredoxin] + S-adenosyl-L-homocysteine. Its function is as follows. Specifically methylates position 2 of adenine 2503 in 23S rRNA and position 2 of adenine 37 in tRNAs. m2A2503 modification seems to play a crucial role in the proofreading step occurring at the peptidyl transferase center and thus would serve to optimize ribosomal fidelity. This Myxococcus xanthus (strain DK1622) protein is Dual-specificity RNA methyltransferase RlmN 1.